We begin with the raw amino-acid sequence, 774 residues long: Shugoshin (774 aa).

Residues 41–105 are a coiled coil; it reads SLRIRGLENE…AELSSLLASL (65 aa). Disordered regions lie at residues 106–151, 205–661, and 676–774; these read GEPP…QEGR, SPSP…DAQL, and CASP…SMML. Basic and acidic residues predominate over residues 109 to 120; the sequence is PSKRRLSEERRY. Acidic residues predominate over residues 214 to 224; it reads AEETETTEQVE. A compositionally biased stretch (polar residues) spans 297–318; that stretch reads GDNQNEPNKATKLQQGKENGNE. Positions 382-398 are enriched in basic and acidic residues; the sequence is KGKEKVDLPAPDKKSAV. A compositionally biased stretch (polar residues) spans 399-409; the sequence is EETQGNSTSAF. 2 stretches are compositionally biased toward basic and acidic residues: residues 482–495 and 549–558; these read NLRDKMRRPTKELF and FEKEKEKEPQ. Composition is skewed to polar residues over residues 595-604 and 640-651; these read PSVQEQSTLN and QSMSRSVPTIPT. Residues 706-722 are compositionally biased toward low complexity; sequence ASSAASTETTATASAKP. A compositionally biased stretch (acidic residues) spans 743-754; that stretch reads LAQEEEDEEDVG. Positions 765 to 774 are enriched in basic residues; sequence RASRRRSMML.

This sequence belongs to the shugoshin family.

The protein resides in the nucleus. Its subcellular location is the chromosome. The protein localises to the centromere. Its function is as follows. Plays a central role in chromosome cohesion during cell division by preventing premature dissociation of cohesin complex from centromeres after prophase, when most of cohesin complex dissociates from chromosomes arms. In Neurospora crassa (strain ATCC 24698 / 74-OR23-1A / CBS 708.71 / DSM 1257 / FGSC 987), this protein is Shugoshin (sgo-1).